The sequence spans 492 residues: Cobyric acid synthase (492 aa).

A GATase cobBQ-type domain is found at 259–453; it reads HTTVAVVAYP…LHGLFEDAVA (195 aa). The active-site Nucleophile is the cysteine 340. The active site involves histidine 445.

Belongs to the CobB/CobQ family. CobQ subfamily.

The protein operates within cofactor biosynthesis; adenosylcobalamin biosynthesis. Functionally, catalyzes amidations at positions B, D, E, and G on adenosylcobyrinic A,C-diamide. NH(2) groups are provided by glutamine, and one molecule of ATP is hydrogenolyzed for each amidation. This chain is Cobyric acid synthase, found in Paracidovorax citrulli (strain AAC00-1) (Acidovorax citrulli).